A 304-amino-acid chain; its full sequence is Protoheme IX farnesyltransferase 2 (304 aa).

9 helical membrane passes run 28 to 48 (VVAL…VVDF), 50 to 70 (WLQA…AAAF), 98 to 118 (ISVA…LYAL), 122 to 142 (LTAW…TMYL), 150 to 170 (IVIA…AVTG), 176 to 196 (AWLL…AIAI), 223 to 243 (ILLY…VGMV), 245 to 265 (SVYL…AWKL), and 282 to 302 (IYHL…GLFF).

It belongs to the UbiA prenyltransferase family. Protoheme IX farnesyltransferase subfamily.

It is found in the cell inner membrane. It carries out the reaction heme b + (2E,6E)-farnesyl diphosphate + H2O = Fe(II)-heme o + diphosphate. The protein operates within porphyrin-containing compound metabolism; heme O biosynthesis; heme O from protoheme: step 1/1. Functionally, converts heme B (protoheme IX) to heme O by substitution of the vinyl group on carbon 2 of heme B porphyrin ring with a hydroxyethyl farnesyl side group. The chain is Protoheme IX farnesyltransferase 2 from Vibrio campbellii (strain ATCC BAA-1116).